Consider the following 234-residue polypeptide: Triosephosphate isomerase (234 aa).

8–10 (NFK) contacts substrate. His90 functions as the Electrophile in the catalytic mechanism. Glu159 serves as the catalytic Proton acceptor. Substrate contacts are provided by Gly165 and Ser197.

This sequence belongs to the triosephosphate isomerase family. As to quaternary structure, homodimer.

It is found in the cytoplasm. The enzyme catalyses D-glyceraldehyde 3-phosphate = dihydroxyacetone phosphate. Its pathway is carbohydrate biosynthesis; gluconeogenesis. It participates in carbohydrate degradation; glycolysis; D-glyceraldehyde 3-phosphate from glycerone phosphate: step 1/1. Functionally, involved in the gluconeogenesis. Catalyzes stereospecifically the conversion of dihydroxyacetone phosphate (DHAP) to D-glyceraldehyde-3-phosphate (G3P). This Helicobacter acinonychis (strain Sheeba) protein is Triosephosphate isomerase.